An 87-amino-acid chain; its full sequence is Small ribosomal subunit protein bS20 (87 aa).

The segment at 1 to 26 (MANIKSAKKRAVQSEKARKHNASRRS) is disordered.

This sequence belongs to the bacterial ribosomal protein bS20 family.

In terms of biological role, binds directly to 16S ribosomal RNA. The sequence is that of Small ribosomal subunit protein bS20 from Enterobacter sp. (strain 638).